A 365-amino-acid polypeptide reads, in one-letter code: Putative tRNA 2'-phosphotransferase (365 aa).

Disordered stretches follow at residues 1–35 (MYKNMNSHELIEESNNSGTPATKSSSKPTKKIRPR) and 231–254 (LLDAKASPKNNRSDESDQSDPESI). Positions 17–27 (SGTPATKSSSK) are enriched in low complexity.

This sequence belongs to the KptA/TPT1 family.

It catalyses the reaction 2'-phospho-[ligated tRNA] + NAD(+) = mature tRNA + ADP-alpha-D-ribose 1'',2''-cyclic phosphate + nicotinamide. Catalyzes the last step of tRNA splicing, the transfer of the splice junction 2'-phosphate from ligated tRNA to NAD to produce ADP-ribose 1''-2'' cyclic phosphate. The sequence is that of Putative tRNA 2'-phosphotransferase from Schizosaccharomyces pombe (strain 972 / ATCC 24843) (Fission yeast).